Consider the following 1077-residue polypeptide: Endo-1,4-beta-xylanase Y (1077 aa).

The first 26 residues, 1–26 (MKNKRVLAKITALVVLLGVFFVLPSN), serve as a signal peptide directing secretion. One can recognise a CBM-cenC 1 domain in the interval 33-180 (DYEVVHDTFE…IFDDVTITRK (148 aa)). In terms of domain architecture, GH10 spans 189 to 538 (YAANAVLKDM…KPAYNAVASI (350 aa)). The active-site Proton donor is the Glu337. Residue Glu460 is the Nucleophile of the active site. The interval 543–563 (EWGDGNNPAGGGGGGKPEEPD) is disordered. Positions 565 to 714 (NGYYYHDTFE…YIDEAIGAVA (150 aa)) constitute a CBM-cenC 2 domain. In terms of domain architecture, Dockerin spans 728-796 (PPVLLGDVNG…LLRVIDKFPV (69 aa)).

It belongs to the glycosyl hydrolase 10 (cellulase F) family.

The catalysed reaction is Endohydrolysis of (1-&gt;4)-beta-D-xylosidic linkages in xylans.. In Acetivibrio thermocellus (Hungateiclostridium thermocellum), this protein is Endo-1,4-beta-xylanase Y (xynY).